The following is a 380-amino-acid chain: Cytochrome b (380 aa).

The next 4 helical transmembrane spans lie at 33 to 53 (FGSL…FLAM), 77 to 98 (WLIR…YLHI), 113 to 133 (WNIG…GYVL), and 178 to 198 (FFAF…IHLI). Heme b contacts are provided by histidine 83 and histidine 97. Heme b is bound by residues histidine 182 and histidine 196. Histidine 201 is an a ubiquinone binding site. Helical transmembrane passes span 226–246 (YKDL…ALFS), 288–308 (LGGV…PVLH), 320–340 (FSQF…WIGG), and 347–367 (FIII…ILVP).

Belongs to the cytochrome b family. The cytochrome bc1 complex contains 3 respiratory subunits (MT-CYB, CYC1 and UQCRFS1), 2 core proteins (UQCRC1 and UQCRC2) and probably 6 low-molecular weight proteins. Requires heme b as cofactor.

The protein localises to the mitochondrion inner membrane. Functionally, component of the ubiquinol-cytochrome c reductase complex (complex III or cytochrome b-c1 complex) that is part of the mitochondrial respiratory chain. The b-c1 complex mediates electron transfer from ubiquinol to cytochrome c. Contributes to the generation of a proton gradient across the mitochondrial membrane that is then used for ATP synthesis. The chain is Cytochrome b (mt-cyb) from Astronotus ocellatus (Oscar).